The chain runs to 533 residues: MLGLAGRCSAAAASAARPALRRAAGPSHGFLPLLLSRGAGPAAAVGARRDHAAQAAPAAKAGSATGRIVAVIGAVVDVQFDEGLPPILNALEVQGRETRLVLEVAQHLGENTVRTIAMDGTEGLVRGQKVLDSGAPIRIPVGPETLGRIMNVIGEPIDERGPITTKQFAAIHAEAPEFVEMSVEQKILVTGIKVVDLLAPYAKGGKIGLFGGAGVGKTVLIMELINNVAKAHGGYSVFAGVGERTREGNDLYHEMIESGVINLKDATSKVALVYGQMNEPPGARARVALTGLTVAEYFRDQEGQDVLLFIDNIFRFTQAGSEVSALLGRIPSAVGYQPTLATDMGTMQERITTTRKGSITSVQAIYVPADDLTDPAPATTFAHLDATTVLSRAIAELGIYPAVDPLDSTSRIMDPNIVGPEHYDVARGVQKILQDYKSLQDIIAILGMDELSEEDKLTVARARKIQRFLSQPFQVAEVFTGHMGKLVPLKETIKGFKQILAGEYDHLPEQAFYMVGPIEEAVAKAEKLAEEHA.

The N-terminal 53 residues, 1-53 (MLGLAGRCSAAAASAARPALRRAAGPSHGFLPLLLSRGAGPAAAVGARRDHAA), are a transit peptide targeting the mitochondrion. Residues Gly-214, Val-215, Gly-216, Lys-217, Thr-218, and Val-219 each coordinate ADP. Gly-214 contributes to the ATP binding site. Phosphate is bound by residues Gly-214, Val-215, Gly-216, Lys-217, and Thr-218. The ATP site is built by Gly-216, Lys-217, Thr-218, and Val-219. A Mg(2+)-binding site is contributed by Thr-218. Glu-243 is a binding site for Mg(2+). ATP is bound at residue Arg-244.

In terms of assembly, homotrimer. Component of the ATP synthase complex composed at least of ATP5F1A/subunit alpha, ATP5F1B/subunit beta, ATP5MC1/subunit c (homooctomer), MT-ATP6/subunit a, MT-ATP8/subunit 8, ATP5ME/subunit e, ATP5MF/subunit f, ATP5MG/subunit g, ATP5MK/subunit k, ATP5MJ/subunit j, ATP5F1C/subunit gamma, ATP5F1D/subunit delta, ATP5F1E/subunit epsilon, ATP5PF/subunit F6, ATP5PB/subunit b, ATP5PD/subunit d, ATP5PO/subunit OSCP. ATP synthase complex consists of a soluble F(1) head domain (subunits alpha(3) and beta(3)) - the catalytic core - and a membrane F(0) domain - the membrane proton channel (subunits c, a, 8, e, f, g, k and j). These two domains are linked by a central stalk (subunits gamma, delta, and epsilon) rotating inside the F1 region and a stationary peripheral stalk (subunits F6, b, d, and OSCP).

The protein localises to the mitochondrion inner membrane. The enzyme catalyses ATP + H2O + 4 H(+)(in) = ADP + phosphate + 5 H(+)(out). Its function is as follows. Catalytic subunit beta, of the mitochondrial membrane ATP synthase complex (F(1)F(0) ATP synthase or Complex V) that produces ATP from ADP in the presence of a proton gradient across the membrane which is generated by electron transport complexes of the respiratory chain. ATP synthase complex consist of a soluble F(1) head domain - the catalytic core - and a membrane F(1) domain - the membrane proton channel. These two domains are linked by a central stalk rotating inside the F(1) region and a stationary peripheral stalk. During catalysis, ATP synthesis in the catalytic domain of F(1) is coupled via a rotary mechanism of the central stalk subunits to proton translocation. In vivo, can only synthesize ATP although its ATP hydrolase activity can be activated artificially in vitro. With the subunit alpha (ATP5F1A), forms the catalytic core in the F(1) domain. The protein is ATP synthase F(1) complex catalytic subunit beta, mitochondrial of Gallus gallus (Chicken).